The primary structure comprises 531 residues: Outer dynein arm-docking complex subunit 4 (531 aa).

TPR repeat units follow at residues 15–48 (FSTYMAEGEQLYHKAEYKKASDSFTAALQLQPEE), 50–82 (NCLVARSKCFLKLGEPECALKDAEASLQIENDF), and 83–116 (FKGLYQKAEALYAMGDFEFALVHYHRGYKLRPEF). The interval 161–185 (KQKAQVKVQKKDSKQQKKVDPERSQ) is disordered. Basic and acidic residues predominate over residues 169-185 (QKKDSKQQKKVDPERSQ). TPR repeat units lie at residues 275-307 (VKSLEEIDQLLSSGKAEESYKKAQLVLKKVERW), 320-353 (GSLHSCIGNAQMDMGQIEAALQSHKKDLAIAEKY), 360-393 (SRALDNIGRVYARIGKFNEAIKVWEEKIPLANSS), 397-430 (TWLYHEIGRCYLELEQTAEAKEYGEKSQQEADAA), and 437-470 (LNACVLLAQAEVKLKHYQSAISSFENALERARLL). Positions 487-531 (KQGMEEQQESEQNNDENDNLRADGNTARDEEEEDVHVQRTEEDEG) are disordered. The span at 492–503 (EQQESEQNNDEN) shows a compositional bias: acidic residues. Basic and acidic residues predominate over residues 521–531 (VHVQRTEEDEG).

Component of the outer dynein arm-docking complex. As to expression, in the mucociliary epithelium, specifically expressed in ciliated cells.

The protein resides in the cytoplasm. It is found in the cytoskeleton. The protein localises to the cilium axoneme. Component of the outer dynein arm-docking complex (ODA-DC) that mediates outer dynein arms (ODA) binding onto the doublet microtubule. Plays an essential role for the assembly of ODA-DC and in the docking of ODA in ciliary axoneme. Functionally, required for the docking of the outer dynein arm to cilia, hence plays an essential role in cilia motility. The polypeptide is Outer dynein arm-docking complex subunit 4 (odad4) (Xenopus laevis (African clawed frog)).